We begin with the raw amino-acid sequence, 318 residues long: Ribonuclease Z (318 aa).

Zn(2+) contacts are provided by His-62, His-64, Asp-66, His-67, His-144, Asp-215, and His-273. Asp-66 (proton acceptor) is an active-site residue.

This sequence belongs to the RNase Z family. In terms of assembly, homodimer. Requires Zn(2+) as cofactor.

It carries out the reaction Endonucleolytic cleavage of RNA, removing extra 3' nucleotides from tRNA precursor, generating 3' termini of tRNAs. A 3'-hydroxy group is left at the tRNA terminus and a 5'-phosphoryl group is left at the trailer molecule.. Zinc phosphodiesterase, which displays some tRNA 3'-processing endonuclease activity. Probably involved in tRNA maturation, by removing a 3'-trailer from precursor tRNA. This Prochlorococcus marinus (strain MIT 9303) protein is Ribonuclease Z.